The sequence spans 87 residues: uncharacterized protein (87 aa).

A helical membrane pass occupies residues 63–83 (IVLALVLGVFSLVGLIFIIYF).

It is found in the membrane. This is an uncharacterized protein from Dictyostelium discoideum (Social amoeba).